Reading from the N-terminus, the 1018-residue chain is Thrombospondin type-1 domain-containing protein 4 (1018 aa).

Positions 1–25 (MVSHFMGSLSVLCFLLLLGFQFVCP) are cleaved as a signal peptide. Positions 53–307 (PGVWGAWGPW…YKLCNTNVCP (255 aa)) constitute a TSP type-1 1 domain. Disordered stretches follow at residues 111–235 (SVPL…RSGL), 254–279 (PAAS…ATQS), and 534–623 (SPQV…NWKQ). A compositionally biased stretch (basic residues) spans 187-200 (QRLRRQKLSSRHSR). A compositionally biased stretch (low complexity) spans 201–210 (SQGASSARHG). The span at 259–279 (LFHSPETSNNHGVGTHGATQS) shows a compositional bias: polar residues. Basic and acidic residues-rich tracts occupy residues 556 to 577 (RSQE…RGEA) and 592 to 603 (RHPDRFSPHRPD). TSP type-1 domains follow at residues 676–737 (CPAF…KICS), 739–792 (WQIR…DMGP), 793–851 (CAKS…GPCT), 852–911 (GKVE…HLKP), and 912–968 (CGAK…QDCV). Residues 971-1008 (VDENCKDKYYNCNVVVQARLCVYNYYKTACCASCTRVA) enclose the PLAC domain.

Interacts with FBN1. May interact with TGFB1.

Its subcellular location is the secreted. It localises to the extracellular space. The protein localises to the extracellular matrix. In terms of biological role, promotes FBN1 matrix assembly. Attenuates TGFB signaling, possibly by accelerating the sequestration of large latent complexes of TGFB or active TGFB by FBN1 microfibril assembly, thereby negatively regulating the expression of TGFB regulatory targets, such as POSTN. This chain is Thrombospondin type-1 domain-containing protein 4 (THSD4), found in Homo sapiens (Human).